Here is a 1289-residue protein sequence, read N- to C-terminus: SH3 domain and tetratricopeptide repeat-containing protein 2 (1289 aa).

2 SH3 domains span residues 176-239 (EGHF…PLPV) and 267-330 (IGRG…LDSC). A disordered region spans residues 393–442 (SQPEGFREARSGGTWMERQTIGSRRSSGSGDSSPEEDELISASSDSYHLP). Residues 414-424 (GSRRSSGSGDS) are compositionally biased toward low complexity. TPR repeat units follow at residues 529-562 (ARLC…LDGA), 758-791 (RTLC…GKLL), 837-870 (GVVH…AREM), 1002-1038 (GQLL…FVDL), 1085-1119 (LKLY…LARR), 1120-1153 (MKAL…ATLA), 1167-1200 (LVAF…CPPW), and 1211-1245 (AKVY…AVLM).

The protein is SH3 domain and tetratricopeptide repeat-containing protein 2 (Sh3tc2) of Mus musculus (Mouse).